The sequence spans 152 residues: Nucleoside diphosphate kinase B (152 aa).

The interaction with AKAP13 stretch occupies residues 1–66 (MAHQERTFIA…DRPFYPGLVK (66 aa)). K12, F60, R88, T94, R105, and N115 together coordinate ATP. The active-site Pros-phosphohistidine intermediate is H118.

It belongs to the NDK family. As to quaternary structure, hexamer of two different chains: An and B (A6, A5B, A4B2, A3B3, A2B4, AB5, B6). Interacts with CAPN8. Interacts with AKAP13. Interacts with ITGB1BP1 (via C-terminal domain region). Interacts with BCL2L10. It depends on Mg(2+) as a cofactor. In terms of tissue distribution, ubiquitous.

The protein localises to the cytoplasm. It localises to the cell projection. The protein resides in the lamellipodium. It is found in the ruffle. Its subcellular location is the nucleus. It carries out the reaction a 2'-deoxyribonucleoside 5'-diphosphate + ATP = a 2'-deoxyribonucleoside 5'-triphosphate + ADP. It catalyses the reaction a ribonucleoside 5'-diphosphate + ATP = a ribonucleoside 5'-triphosphate + ADP. The enzyme catalyses ATP + protein L-histidine = ADP + protein N-phospho-L-histidine.. Its function is as follows. Major role in the synthesis of nucleoside triphosphates other than ATP. The ATP gamma phosphate is transferred to the NDP beta phosphate via a ping-pong mechanism, using a phosphorylated active-site intermediate. Negatively regulates Rho activity by interacting with AKAP13/LBC. Acts as a transcriptional activator of the MYC gene; binds DNA non-specifically. Binds to both single-stranded guanine- and cytosine-rich strands within the nuclease hypersensitive element (NHE) III(1) region of the MYC gene promoter. Does not bind to duplex NHE III(1). Has G-quadruplex (G4) DNA-binding activity, which is independent of its nucleotide-binding and kinase activity. Binds both folded and unfolded G4 with similar low nanomolar affinities. Stabilizes folded G4s regardless of whether they are prefolded or not. Exhibits histidine protein kinase activity. The sequence is that of Nucleoside diphosphate kinase B (NME2) from Canis lupus familiaris (Dog).